Consider the following 186-residue polypeptide: Ribosome-recycling factor (186 aa).

It belongs to the RRF family.

The protein resides in the cytoplasm. In terms of biological role, responsible for the release of ribosomes from messenger RNA at the termination of protein biosynthesis. May increase the efficiency of translation by recycling ribosomes from one round of translation to another. The sequence is that of Ribosome-recycling factor from Cupriavidus taiwanensis (strain DSM 17343 / BCRC 17206 / CCUG 44338 / CIP 107171 / LMG 19424 / R1) (Ralstonia taiwanensis (strain LMG 19424)).